Here is a 504-residue protein sequence, read N- to C-terminus: Maturase K (504 aa).

This sequence belongs to the intron maturase 2 family. MatK subfamily.

It localises to the plastid. The protein localises to the chloroplast. In terms of biological role, usually encoded in the trnK tRNA gene intron. Probably assists in splicing its own and other chloroplast group II introns. The sequence is that of Maturase K from Betula papyrifera (Paper birch).